Here is a 326-residue protein sequence, read N- to C-terminus: Target of rapamycin complex subunit LST8 (326 aa).

An N-acetylmethionine modification is found at M1. WD repeat units lie at residues M1 to T37, H40 to S80, G83 to Q122, Q126 to L165, and E168 to V207. Position 51 is a phosphothreonine (T51). K86 participates in a covalent cross-link: Glycyl lysine isopeptide (Lys-Gly) (interchain with G-Cter in SUMO3). Residues K215, K245, and K261 each participate in a glycyl lysine isopeptide (Lys-Gly) (interchain with G-Cter in SUMO3) cross-link. One copy of the WD 6 repeat lies at A218–E257. The stretch at S268–G309 is one WD 7 repeat. K305 is covalently cross-linked (Glycyl lysine isopeptide (Lys-Gly) (interchain with G-Cter in SUMO3); alternate). Residues K305 and K313 each participate in a glycyl lysine isopeptide (Lys-Gly) (interchain with G-Cter in ubiquitin); alternate cross-link. A Glycyl lysine isopeptide (Lys-Gly) (interchain with G-Cter in SUMO1); alternate cross-link involves residue K313.

It belongs to the WD repeat LST8 family. As to quaternary structure, part of the mechanistic target of rapamycin complex 1 (mTORC1) which contains MTOR, MLST8 and RPTOR. mTORC1 associates with AKT1S1/PRAS40, which inhibits its activity. mTORC1 binds to and is inhibited by FKBP12-rapamycin. Within mTORC1, interacts directly with MTOR and RPTOR. Component of the mechanistic target of rapamycin complex 2 (mTORC2), consisting in two heterotretramers composed of MTOR, MLST8, RICTOR and MAPKAP1/SIN1. Contrary to mTORC1, mTORC2 does not bind to and is not sensitive to FKBP12-rapamycin. mTORC1 and mTORC2 associate with DEPTOR, which regulates their activity. Interacts with RHEB. Interacts with MEAK7. Interacts with SIK3. Interacts with SLC38A7; this interaction promotes the recruitment of mTORC1 to the lysosome and its subsequent activation. Post-translationally, phosphorylation at Thr-51 by CDK1 promotes ubiquitination by the SCF(FBXW7) complex, followed by degradation. Ubiquitination by the SCF(FBXW7) and SCF(FBXW11) complexes following phosphorylation at Thr-51 by CDK1, leads to its degradation by the proteasome. Ubiquitination at Lys-305 and Lys-313 by TRAF2 via 'Lys-63'-linked polyubiquitin chains inhibits formation of the mTORC2 complex, while promoting formation of the mTORC1 complex: ubiquitination disrupts the interaction between MLST8 and MAPKAP1/SIN1 to favor mTORC1 assembly. Deubiquitination at Lys-305 and Lys-313 by OTUD7B promotes MLST8 interaction with MAPKAP1/SIN1, facilitating mTORC2 assembly. In terms of processing, sumoylation with SUMO1, SUMO2 and SUMO3 promotes assembly of both mTORC1 and mTORC2 complexes. In terms of tissue distribution, expressed at highest levels in the brain and testis, followed by lung, heart, kidney, skeletal muscle, spleen and liver. Also expressed in epididymal, abdominal and brown fat, small intestine and pancreas.

It localises to the lysosome membrane. It is found in the cytoplasm. In terms of biological role, subunit of both mTORC1 and mTORC2, which regulates cell growth and survival in response to nutrient and hormonal signals. mTORC1 is activated in response to growth factors or amino acids. In response to nutrients, mTORC1 is recruited to the lysosome membrane and promotes protein, lipid and nucleotide synthesis by phosphorylating several substrates, such as ribosomal protein S6 kinase (RPS6KB1 and RPS6KB2) and EIF4EBP1 (4E-BP1). In the same time, it inhibits catabolic pathways by phosphorylating the autophagy initiation components ULK1 and ATG13, as well as transcription factor TFEB, a master regulators of lysosomal biogenesis and autophagy. The mTORC1 complex is inhibited in response to starvation and amino acid depletion. Within mTORC1, MLST8 interacts directly with MTOR and enhances its kinase activity. In nutrient-poor conditions, stabilizes the MTOR-RPTOR interaction and favors RPTOR-mediated inhibition of MTOR activity. As part of the mTORC2 complex, transduces signals from growth factors to pathways involved in proliferation, cytoskeletal organization, lipogenesis and anabolic output. mTORC2 is also activated by growth factors, but seems to be nutrient-insensitive. In response to growth factors, mTORC2 phosphorylates and activates AGC protein kinase family members, including AKT (AKT1, AKT2 and AKT3), PKC (PRKCA, PRKCB and PRKCE) and SGK1. mTORC2 functions upstream of Rho GTPases to regulate the actin cytoskeleton, probably by activating one or more Rho-type guanine nucleotide exchange factors. mTORC2 promotes the serum-induced formation of stress-fibers or F-actin. mTORC2 plays a critical role in AKT1 activation by mediating phosphorylation of different sites depending on the context, such as 'Thr-450', 'Ser-473', 'Ser-477' or 'Thr-479', facilitating the phosphorylation of the activation loop of AKT1 on 'Thr-308' by PDPK1/PDK1 which is a prerequisite for full activation. mTORC2 regulates the phosphorylation of SGK1 at 'Ser-422'. mTORC2 also modulates the phosphorylation of PRKCA on 'Ser-657'. Within mTORC2, MLST8 acts as a bridge between MAPKAP1/SIN1 and MTOR. The polypeptide is Target of rapamycin complex subunit LST8 (Rattus norvegicus (Rat)).